We begin with the raw amino-acid sequence, 357 residues long: DNA replication and repair protein RecF (357 aa).

30–37 (GANGSGKT) provides a ligand contact to ATP.

This sequence belongs to the RecF family.

Its subcellular location is the cytoplasm. In terms of biological role, the RecF protein is involved in DNA metabolism; it is required for DNA replication and normal SOS inducibility. RecF binds preferentially to single-stranded, linear DNA. It also seems to bind ATP. This Salmonella heidelberg (strain SL476) protein is DNA replication and repair protein RecF.